Here is a 489-residue protein sequence, read N- to C-terminus: MELLKLLCLILFLTLSYVAFAIIVPPLNFPKNIPTIPFYVVFLPVIFPIDQTELYDLYIRESMEKYGAVKFFFGSRWNILVSRSEYLAQIFKDEDTFAKSGNQKKIPYSALAAYTGDNVISAYGAVWRNYRNAVTNGLQHFDDAPIFKNAKILCTLIKNRLLEGQTSIPMGPLSQRMALDNISQVALGFDFGALTHEKNAFHEHLIRIKKQIFHPFFLTFPFLDVLPIPSRKKAFKDVVSFRELLVKRVQDELVNNYKFEQTTFAASDLIRAHNNEIIDYKQLTDNIVIILVAGHENPQLLFNSSLYLLAKYSNEWQEKLRKEVNGITDPKGLADLPLLNAFLFEVVRMYPPLSTIINRCTTKTCKLGAEIVIPKGVYVGYNNFGTSHDPKTWGTTADDFKPERWGSDIETIRKNWRMAKNRCAVTGFHGGRRACLGEKLALTEMRISLAEMLKQFRWSLDPEWEEKLTPAGPLCPLNLKLKFNENIME.

C435 is a heme binding site.

This sequence belongs to the cytochrome P450 family. Heme is required as a cofactor.

Its function is as follows. Involved in spore wall maturation. Thought to catalyze the oxidation of tyrosine residues in the formation of LL-dityrosine a precursor of the spore wall. This Saccharomyces cerevisiae (strain ATCC 204508 / S288c) (Baker's yeast) protein is Cytochrome P450-DIT2 (DIT2).